The following is a 252-amino-acid chain: 5'-methylthioadenosine/S-adenosylhomocysteine nucleosidase (252 aa).

Glu20 serves as the catalytic Proton acceptor. Substrate-binding positions include Gly86, Ile160, and 181–182 (ME). Asp205 functions as the Proton donor in the catalytic mechanism.

Belongs to the PNP/UDP phosphorylase family. MtnN subfamily. In terms of assembly, homodimer.

The catalysed reaction is S-adenosyl-L-homocysteine + H2O = S-(5-deoxy-D-ribos-5-yl)-L-homocysteine + adenine. The enzyme catalyses S-methyl-5'-thioadenosine + H2O = 5-(methylsulfanyl)-D-ribose + adenine. It carries out the reaction 5'-deoxyadenosine + H2O = 5-deoxy-D-ribose + adenine. It participates in amino-acid biosynthesis; L-methionine biosynthesis via salvage pathway; S-methyl-5-thio-alpha-D-ribose 1-phosphate from S-methyl-5'-thioadenosine (hydrolase route): step 1/2. Its function is as follows. Catalyzes the irreversible cleavage of the glycosidic bond in both 5'-methylthioadenosine (MTA) and S-adenosylhomocysteine (SAH/AdoHcy) to adenine and the corresponding thioribose, 5'-methylthioribose and S-ribosylhomocysteine, respectively. Also cleaves 5'-deoxyadenosine, a toxic by-product of radical S-adenosylmethionine (SAM) enzymes, into 5-deoxyribose and adenine. Thus, is required for in vivo function of the radical SAM enzymes biotin synthase and lipoic acid synthase, that are inhibited by 5'-deoxyadenosine accumulation. The chain is 5'-methylthioadenosine/S-adenosylhomocysteine nucleosidase from Buchnera aphidicola subsp. Baizongia pistaciae (strain Bp).